The chain runs to 275 residues: T-cell ecto-ADP-ribosyltransferase 2 (275 aa).

An N-terminal signal peptide occupies residues 1–20 (MPSNICKFFLTWWLIQQVTG). 2 disulfides stabilise this stretch: cysteine 41/cysteine 243 and cysteine 141/cysteine 193. The region spanning 61-238 (AKLKVAWEEA…IFLDSPKRKK (178 aa)) is the TR mART core domain. 3 residues coordinate NAD(+): tyrosine 98, arginine 146, and glutamine 164. Arginine 146 is an active-site residue. Residue serine 167 is part of the active site. Serine 202 contributes to the NAD(+) binding site. Arginine 204 carries the ADP-ribosylarginine; by autocatalysis modification. The active site involves glutamate 209. Serine 246 carries GPI-anchor amidated serine lipidation. The propeptide at 247-275 (SAGARESCVSLFLVVLPSLLVQLLCLAEP) is removed in mature form.

It belongs to the Arg-specific ADP-ribosyltransferase family. In terms of tissue distribution, postthymic T-cells.

The protein resides in the cell membrane. It catalyses the reaction L-arginyl-[protein] + NAD(+) = N(omega)-(ADP-D-ribosyl)-L-arginyl-[protein] + nicotinamide + H(+). The enzyme catalyses NAD(+) + H2O = ADP-D-ribose + nicotinamide + H(+). Its function is as follows. Has both NAD(+) glycohydrolase and ADP-ribosyltransferase activity (to a lesser extent). The chain is T-cell ecto-ADP-ribosyltransferase 2 (Art2b) from Rattus norvegicus (Rat).